A 496-amino-acid polypeptide reads, in one-letter code: Geranylhydroquinone 3''-hydroxylase CYP76B74 (496 aa).

Residues 3–23 (YTTILVGFLIGFVLFKALTRK) form a helical membrane-spanning segment. Position 436 (cysteine 436) interacts with heme.

This sequence belongs to the cytochrome P450 family. Requires heme as cofactor.

It is found in the endoplasmic reticulum membrane. It carries out the reaction (2E)-geranylhydroquinone + reduced [NADPH--hemoprotein reductase] + O2 = (2Z)-3''-hydroxygeranylhydroquinone + oxidized [NADPH--hemoprotein reductase] + H2O + H(+). Hydroxylase involved in the biosynthesis pathway of the red naphthoquinone pigment shikonin. Catalyzes the key step C-3''-hydroxylation of the prenylated phenolic intermediate geranylhydroquinone to form 3''-hydroxygeranylhydroquinone. The polypeptide is Geranylhydroquinone 3''-hydroxylase CYP76B74 (Arnebia euchroma (Pink arnebia)).